The primary structure comprises 45 residues: Scolopendra 20417.15 Da toxin (45 aa).

The segment at 26–45 is disordered; it reads KVANGQEAGQPGAXNMKELH.

This sequence belongs to the CRISP family. Venom allergen 5-like subfamily. Contains 3 disulfide bonds. Expressed by the venom gland.

The protein localises to the secreted. This chain is Scolopendra 20417.15 Da toxin, found in Scolopendra viridicornis nigra (Brazilian giant centipede).